Reading from the N-terminus, the 85-residue chain is Cell division topological specificity factor (85 aa).

The protein belongs to the MinE family.

In terms of biological role, prevents the cell division inhibition by proteins MinC and MinD at internal division sites while permitting inhibition at polar sites. This ensures cell division at the proper site by restricting the formation of a division septum at the midpoint of the long axis of the cell. This chain is Cell division topological specificity factor, found in Dechloromonas aromatica (strain RCB).